The sequence spans 473 residues: ATP synthase subunit beta (473 aa).

153 to 160 (GGAGVGKT) is an ATP binding site.

The protein belongs to the ATPase alpha/beta chains family. As to quaternary structure, F-type ATPases have 2 components, CF(1) - the catalytic core - and CF(0) - the membrane proton channel. CF(1) has five subunits: alpha(3), beta(3), gamma(1), delta(1), epsilon(1). CF(0) has three main subunits: a(1), b(2) and c(9-12). The alpha and beta chains form an alternating ring which encloses part of the gamma chain. CF(1) is attached to CF(0) by a central stalk formed by the gamma and epsilon chains, while a peripheral stalk is formed by the delta and b chains.

It localises to the cell membrane. The enzyme catalyses ATP + H2O + 4 H(+)(in) = ADP + phosphate + 5 H(+)(out). Functionally, produces ATP from ADP in the presence of a proton gradient across the membrane. The catalytic sites are hosted primarily by the beta subunits. The polypeptide is ATP synthase subunit beta (Rickettsia africae (strain ESF-5)).